Consider the following 309-residue polypeptide: Glutaminase (309 aa).

Ser65, Asn117, Glu162, Asn169, Tyr193, Tyr245, and Val263 together coordinate substrate.

It belongs to the glutaminase family. Homotetramer.

The catalysed reaction is L-glutamine + H2O = L-glutamate + NH4(+). The polypeptide is Glutaminase (Clostridioides difficile (strain 630) (Peptoclostridium difficile)).